The sequence spans 1615 residues: Regulating synaptic membrane exocytosis protein 1 (1615 aa).

Residues 1–26 (MSSAVGPRGPRPPTVPPPMQELPDLS) are disordered. Over residues 9 to 20 (GPRPPTVPPPMQ) the composition is skewed to pro residues. Positions 22–205 (LPDLSHLTEE…TKSGAWFFGS (184 aa)) constitute a RabBD domain. The FYVE-type zinc-finger motif lies at 133–193 (KDDAPTCGIC…VCNLCRKQQE (61 aa)). The Zn(2+) site is built by Cys-139, Cys-142, Cys-155, Cys-158, Cys-163, Cys-166, Cys-185, and Cys-188. Positions 205–569 (SGPQQPSQDG…CEDVELESES (365 aa)) are disordered. A compositionally biased stretch (polar residues) spans 206–222 (GPQQPSQDGTLSDTATG). Over residues 227–240 (VPREKKARLQERSR) the composition is skewed to basic and acidic residues. Residues 241-256 (SQTPLSTAAVSSQDTA) are compositionally biased toward polar residues. Residues 327–379 (ADERERKERRETRRLEKGRSQDYSDRPEKRDNGRVAEDQKQRKEEEYQTRYRS) show a composition bias toward basic and acidic residues. The span at 399 to 410 (MHARVSRARHER) shows a compositional bias: basic residues. Low complexity predominate over residues 421–459 (EAAAAAPAEATAGKRAPATARVSPPESPRARAAAAQPPT). Positions 460–475 (EHGPPPPRPAPGPAEP) are enriched in pro residues. Residues 476 to 489 (PEPRVPEPLRKQGR) show a composition bias toward basic and acidic residues. Residues 511-523 (RNDSLSSDQSESV) show a composition bias toward polar residues. At Ser-514 the chain carries Phosphoserine. Over residues 529–541 (KPHRPKRGGKRRQ) the composition is skewed to basic residues. Acidic residues predominate over residues 559 to 569 (SCEDVELESES). Phosphoserine is present on Ser-592. Residues 619 to 705 (RTTMPKESGA…EPQVEIIVSR (87 aa)) enclose the PDZ domain. The interval 712–746 (RIPESSHPPLESSSSSFESQKMERPSISVISPTSP) is disordered. The span at 714-730 (PESSHPPLESSSSSFES) shows a compositional bias: low complexity. A phosphoserine mark is found at Ser-742 and Ser-745. Residues 756-879 (LPGQLSVKLW…ALLDDEPHWY (124 aa)) enclose the C2 1 domain. The segment at 884–1201 (HDESSLPLPQ…RQLPQVPVRS (318 aa)) is disordered. Ser-895 bears the Phosphoserine mark. The segment covering 949–958 (ATTLTVPEQQ) has biased composition (polar residues). Ser-991 bears the Phosphoserine mark. Basic and acidic residues predominate over residues 1006–1023 (RHHDASRSPADHRSRHVE). A Phosphoserine modification is found at Ser-1045. Basic and acidic residues predominate over residues 1078–1092 (SPERERHSRKSERCS). The span at 1173-1187 (QGSPTQSPPADTSFG) shows a compositional bias: polar residues. Ser-1175 is subject to Phosphoserine. The residue at position 1177 (Thr-1177) is a Phosphothreonine. 7 positions are modified to phosphoserine: Ser-1179, Ser-1231, Ser-1233, Ser-1234, Ser-1262, Ser-1263, and Ser-1265. Residues 1256-1313 (DNASAKSSDSDVSDVSAISRASSTSRLSSTSFMSEQSERPRGRISSFTPKMQGRRMGT) are disordered. The span at 1268-1289 (SDVSAISRASSTSRLSSTSFMS) shows a compositional bias: low complexity. Ser-1339 bears the Phosphoserine mark. Residues 1368-1397 (RSRSTSQLSQTESGHKKLKSTIQRSTETGM) form a disordered region. A C2 2 domain is found at 1461–1579 (AMGDIQIGME…DLSSMVIGWY (119 aa)). A phosphoserine mark is found at Ser-1600, Ser-1603, Ser-1606, and Ser-1615.

As to quaternary structure, interacts with RAB3C, RAB10, RAB26 and RAB37. Binds SNAP25, SYT1 and CACNA1B. Interaction with SYT1 is enhanced by calcium ions. Interaction with SNAP25 is weaker in the presence of calcium ions. Binds RAB3A, RAB3B and RAB3D that have been activated by GTP-binding. Binds UNC13A. Interacts with TSPOAP1 and RIMBP2. Interacts with PPFIA3 and PPFIA4. Interacts with ERC1. Post-translationally, phosphorylated by BRSK1. As to expression, highly expressed in hippocampus, brain cortex, cerebellum and olfactory bulb. Detected at lower levels in midbrain, hindbrain and spinal cord. Detected retina and in spinal cord motor neurons.

Its subcellular location is the cell membrane. It is found in the synapse. The protein localises to the presynaptic cell membrane. Rab effector involved in exocytosis. May act as scaffold protein that regulates neurotransmitter release at the active zone. Essential for maintaining normal probability of neurotransmitter release and for regulating release during short-term synaptic plasticity. Plays a role in dendrite formation by melanocytes. The chain is Regulating synaptic membrane exocytosis protein 1 (Rims1) from Rattus norvegicus (Rat).